The sequence spans 350 residues: MFS transporter OpS2 (350 aa).

Helical transmembrane passes span Phe-3 to Leu-23, Gly-34 to Leu-54, Trp-65 to Thr-85, Phe-141 to Ile-161, Ala-174 to Val-194, Met-227 to Trp-247, Ile-253 to Phe-273, and Pro-312 to Ala-332.

The protein belongs to the major facilitator superfamily.

The protein resides in the cell membrane. Functionally, MFS transporter; part of the gene cluster that mediates the biosynthesis of the bibenzoquinone oosporein, a metabolite required for fungal virulence that acts by evading host immunity to facilitate fungal multiplication in insects. The function of this putative MFS transporter remains unclear since its deletion leads to increased oosporein production. The polypeptide is MFS transporter OpS2 (Beauveria bassiana (strain ARSEF 2860) (White muscardine disease fungus)).